A 930-amino-acid polypeptide reads, in one-letter code: A disintegrin and metalloproteinase with thrombospondin motifs 5 (930 aa).

The signal sequence occupies residues 1–21 (MRLEWAPLLLLLLLLSASCLS). Positions 22 to 261 (LAADSPAAAP…PQTWWRRRRR (240 aa)) are excised as a propeptide. The segment covering 31–53 (PAQDKTRQPQAAAAAAEPDQPQG) has biased composition (low complexity). 2 disordered regions span residues 31 to 68 (PAQD…LAGQ) and 207 to 231 (ASCE…SRRR). Residues 207–214 (ASCETPAS) carry the Cysteine switch motif. Cys209 is a binding site for Zn(2+). A compositionally biased stretch (polar residues) spans 211–225 (TPASPSGPQESPSVH). In terms of domain architecture, Peptidase M12B spans 267-476 (RQVELLLVAD…GHGNCLLDLP (210 aa)). 8 cysteine pairs are disulfide-bonded: Cys342-Cys394, Cys371-Cys376, Cys388-Cys471, Cys426-Cys455, Cys497-Cys519, Cys508-Cys529, Cys514-Cys548, and Cys542-Cys553. Zn(2+) is bound at residue His410. Glu411 is an active-site residue. His414 and His420 together coordinate Zn(2+). The Disintegrin domain maps to 485–566 (ELPGQTYDAT…TKKKYYSTSS (82 aa)). An N-linked (GlcNAc...) asparagine glycan is attached at Asn498. Residues 567–622 (HGNWGSWGPWGQCSRSCGGGVQFAYRHCNNPAPRNSGRYCTGKRAIYRSCSVTPCP) form the TSP type-1 1 domain. C-linked (Man) tryptophan glycosylation is found at Trp570 and Trp573. Intrachain disulfides connect Cys579–Cys616, Cys583–Cys621, and Cys594–Cys606. Ser582 carries an O-linked (Fuc...) serine glycan. 3 N-linked (GlcNAc...) asparagine glycosylation sites follow: Asn728, Asn802, and Asn807. Positions 732 to 874 (TKIIGTFNKK…HGSNKVGPHS (143 aa)) are spacer. In terms of domain architecture, TSP type-1 2 spans 875 to 929 (TQLQWVTGPWLACSRTCDTGWHTRTVQCQDGNRKLAKGCLLSQRPSAFKQCLLKK).

Zn(2+) serves as cofactor. Post-translationally, the precursor is cleaved by furin and PCSK7 outside of the cell. Glycosylated. Can be O-fucosylated by POFUT2 on a serine or a threonine residue found within the consensus sequence C1-X(2)-(S/T)-C2-G of the TSP type-1 repeat domains where C1 and C2 are the first and second cysteine residue of the repeat, respectively. Fucosylated repeats can then be further glycosylated by the addition of a beta-1,3-glucose residue by the glucosyltransferase, B3GALTL. Fucosylation mediates the efficient secretion of ADAMTS family members. Can also be C-glycosylated with one or two mannose molecules on tryptophan residues within the consensus sequence W-X-X-W of the TPRs, and N-glycosylated. These other glycosylations can also facilitate secretion. As to expression, expressed in skeletal muscle.

It is found in the secreted. Its subcellular location is the extracellular space. It localises to the extracellular matrix. Metalloproteinase that plays an important role in connective tissue organization, development, inflammation and cell migration. Extracellular matrix (ECM) degrading enzyme that shows proteolytic activity toward the hyalectan group of chondroitin sulfate proteoglycans (CSPGs) including ACAN, VCAN, BCAN and NCAN. Cleavage within the hyalectans occurs at Glu-Xaa recognition motifs. Plays a role in embryonic development, including limb and cardiac morphogenesis, and skeletal muscle development through its VCAN remodeling properties. Cleaves VCAN in the pericellular matrix surrounding myoblasts, facilitating myoblast contact and fusion which is required for skeletal muscle development and regeneration. Participates in the development of brown adipose tissue and browning of white adipose tissue. Plays an important role for T-lymphocyte migration from draining lymph nodes following viral infection. This is A disintegrin and metalloproteinase with thrombospondin motifs 5 (Adamts5) from Mus musculus (Mouse).